Reading from the N-terminus, the 175-residue chain is Disulfide bond formation protein B (175 aa).

Over 1–13 the chain is Cytoplasmic; the sequence is MTAFTRFAHSRAS. The helical transmembrane segment at 14 to 30 threads the bilayer; the sequence is WLILTGSAIALEAAALY. The Periplasmic segment spans residues 31–48; sequence FQYVMKLDPCVMCIYQRL. An intrachain disulfide couples Cys40 to Cys43. The chain crosses the membrane as a helical span at residues 49 to 64; the sequence is AVFGILAAGLIGMTAP. The Cytoplasmic portion of the chain corresponds to 65–71; that stretch reads KYRIVRI. A helical membrane pass occupies residues 72-89; sequence LGALGWAVSATWGLKLAL. Topologically, residues 90–144 are periplasmic; it reads ALVDMQNNPSPFSTCSFLPEFPAWMPLHEWFPSVMLPTGMCTDVPWQFMGVTMAE. Cysteines 104 and 130 form a disulfide. The helical transmembrane segment at 145-163 threads the bilayer; it reads WMVVAFSGYLVALLLFIVP. The Cytoplasmic segment spans residues 164-175; it reads ILSGSNKPSLYK.

It belongs to the DsbB family.

The protein resides in the cell inner membrane. In terms of biological role, required for disulfide bond formation in some periplasmic proteins. Acts by oxidizing the DsbA protein. This Shewanella sp. (strain MR-4) protein is Disulfide bond formation protein B.